The following is a 146-amino-acid chain: Cytochrome c' (146 aa).

An N-terminal signal peptide occupies residues 1–21 (MKLRIATIAGLVVLGSGFAVA). Arg-29, Thr-86, Ala-87, Cys-134, Cys-137, and His-138 together coordinate heme c.

In terms of assembly, monomer. Post-translationally, binds 1 heme c group covalently per subunit.

Cytochrome c' is the most widely occurring bacterial c-type cytochrome. Cytochromes c' are high-spin proteins and the heme has no sixth ligand. Their exact function is not known. The polypeptide is Cytochrome c' (cycA) (Rhodopseudomonas palustris (strain ATCC BAA-98 / CGA009)).